We begin with the raw amino-acid sequence, 458 residues long: MEMDTIAAISTALGEGAIGIVRLSGDQAIAIGDKLFKGTKRLEDTPSHTIVYGHLMDDASEEAIEEAMVTVMRAPRTYTREDIVEINCHGGLVSVNRVLQAVLAKGARLAEPGEFTKRAFLNGRIDLSQAEGVIDLIRSKTDRAMNVALRQVEGRLSKKIGKLRQALLETIASIEVNIDYPEYDAETMTAKLINEKMTIVLAEIEALLATAKQGKVLREGLATAIIGRPNVGKSSLMNSLVHEAKAIVTDIPGTTRDTLEEYVNVRGVPLRLIDTAGIRETEDIVERIGVERSRQALKEADLILLVLNYAEKLSKEDEALFEAVKGLDVVVIVNKIDQTGRIDMERVRQLAGENPVVATSFLQEEGVDQLEEAISRLFFAGGVEGADLTYVSNARHIGLLNQAKAHAEEAIAASLTDVPVDLIQIDVTRTWELLGEIIGEDVQDSLIDQLFSQFCLGK.

3 residues coordinate (6S)-5-formyl-5,6,7,8-tetrahydrofolate: Arg-22, Glu-85, and Arg-124. The TrmE-type G domain maps to 220–379; the sequence is GLATAIIGRP…LEEAISRLFF (160 aa). K(+) is bound at residue Asn-230. GTP is bound by residues 230–235, 249–255, and 274–277; these read NVGKSS, TDIPGTT, and DTAG. Ser-234 contacts Mg(2+). The K(+) site is built by Thr-249, Ile-251, and Thr-254. Thr-255 contacts Mg(2+). Residue Lys-458 coordinates (6S)-5-formyl-5,6,7,8-tetrahydrofolate.

It belongs to the TRAFAC class TrmE-Era-EngA-EngB-Septin-like GTPase superfamily. TrmE GTPase family. In terms of assembly, homodimer. Heterotetramer of two MnmE and two MnmG subunits. The cofactor is K(+).

The protein localises to the cytoplasm. Functionally, exhibits a very high intrinsic GTPase hydrolysis rate. Involved in the addition of a carboxymethylaminomethyl (cmnm) group at the wobble position (U34) of certain tRNAs, forming tRNA-cmnm(5)s(2)U34. The protein is tRNA modification GTPase MnmE of Shouchella clausii (strain KSM-K16) (Alkalihalobacillus clausii).